The sequence spans 204 residues: IMPACT family member YigZ (204 aa).

Belongs to the IMPACT family. As to quaternary structure, monomer.

This Escherichia coli (strain K12) protein is IMPACT family member YigZ (yigZ).